An 812-amino-acid chain; its full sequence is Protein FAM83G (812 aa).

N-acetylalanine is present on alanine 2. Positions 2-312 (AFSQVQCLDD…LYLMSQSVSL (311 aa)) are DUF1669. Serine 4 is subject to Phosphoserine. Residues 76-119 (PGSEDPRVSGRRPEPQDNGGADASEETSAAGGPPATETLPSLEY) form a disordered region. Residues 79-90 (EDPRVSGRRPEP) are compositionally biased toward basic and acidic residues. Phosphoserine occurs at positions 124, 127, and 356. Disordered stretches follow at residues 362 to 389 (KSSS…GDLS), 455 to 509 (ASAQ…KPRT), and 521 to 812 (SDIG…HKEP). Residues 455–467 (ASAQHQLWKQSQG) show a composition bias toward polar residues. The span at 471-480 (CPAPCPPPAP) shows a compositional bias: pro residues. Polar residues predominate over residues 545–562 (STASESEVPQQQHSSMTQ). Over residues 576–586 (LDEDEDDDDDY) the composition is skewed to acidic residues. Over residues 589 to 598 (LSDQDSLSGS) the composition is skewed to low complexity. 4 positions are modified to phosphoserine: serine 609, serine 613, serine 615, and serine 649. Residues 721–731 (SSSKKASPAAA) are compositionally biased toward low complexity. Over residues 761–772 (LRAELRATEEHA) the composition is skewed to basic and acidic residues.

It belongs to the FAM83 family. In terms of assembly, interacts with SMAD1 (via MH2 domain); in a SMAD4-independent manner. Directly interacts (via DUF1669) with casein kinase isoforms CSNK1A1 and CSNK1A1L. Post-translationally, BMP signaling induces the phosphorylation by BMPR1A at Ser-609, Ser-613 and Ser-615. Phosphorylation at Ser-609 is necessary for the activation of SMAD4-independent BMP target genes such as NEDD9 and ASNS. Phosphorylated by CSNK1A1.

Its subcellular location is the cytoplasm. It localises to the cytosol. It is found in the nucleus. Functionally, substrate for type I BMP receptor kinase involved in regulation of some target genes of the BMP signaling pathway. Also regulates the expression of several non-BMP target genes, suggesting a role in other signaling pathways. In Mus musculus (Mouse), this protein is Protein FAM83G (Fam83g).